We begin with the raw amino-acid sequence, 236 residues long: NADH-quinone oxidoreductase subunit C (236 aa).

Residues 1 to 20 are disordered; sequence MSPPNQDAQEGRPDSPTAEV.

The protein belongs to the complex I 30 kDa subunit family. NDH-1 is composed of 14 different subunits. Subunits NuoB, C, D, E, F, and G constitute the peripheral sector of the complex.

The protein resides in the cell membrane. The catalysed reaction is a quinone + NADH + 5 H(+)(in) = a quinol + NAD(+) + 4 H(+)(out). NDH-1 shuttles electrons from NADH, via FMN and iron-sulfur (Fe-S) centers, to quinones in the respiratory chain. The immediate electron acceptor for the enzyme in this species is believed to be a menaquinone. Couples the redox reaction to proton translocation (for every two electrons transferred, four hydrogen ions are translocated across the cytoplasmic membrane), and thus conserves the redox energy in a proton gradient. The polypeptide is NADH-quinone oxidoreductase subunit C (Mycobacterium tuberculosis (strain ATCC 25177 / H37Ra)).